The sequence spans 136 residues: Secreted RxLR effector protein 63 (136 aa).

An N-terminal signal peptide occupies residues 1 to 21 (MQRFPYSLLLLLLSATNRSRR). Positions 43–46 (RMLR) match the RxLR motif.

The protein belongs to the RxLR effector family.

Its subcellular location is the secreted. It is found in the host nucleus. Its function is as follows. Effector that partially suppresses the tobacco programmed cell death induced by cell death-inducing proteins. The chain is Secreted RxLR effector protein 63 from Plasmopara viticola (Downy mildew of grapevine).